A 141-amino-acid chain; its full sequence is MNIKTLCHPEYKRISVESLLNPVEETIDCEKPHSQTKINTAKPISASLYVTTNNTAVVQHNVQKRKGVTRRCPQCAVIKTSPQWREGPDGEVTLCNACGLFYRKIFLVFGKDLAKRYFNEIKGVSVKRKVPKSLYGVTRTR.

A GATA-type zinc finger spans residues 72–98 (CPQCAVIKTSPQWREGPDGEVTLCNAC).

This is Protein GAT3 (GAT3) from Saccharomyces cerevisiae (strain ATCC 204508 / S288c) (Baker's yeast).